The sequence spans 159 residues: Ribosomal RNA large subunit methyltransferase H (159 aa).

Position 108 (Gly108) interacts with S-adenosyl-L-methionine.

It belongs to the RNA methyltransferase RlmH family. As to quaternary structure, homodimer.

The protein localises to the cytoplasm. It carries out the reaction pseudouridine(1915) in 23S rRNA + S-adenosyl-L-methionine = N(3)-methylpseudouridine(1915) in 23S rRNA + S-adenosyl-L-homocysteine + H(+). Functionally, specifically methylates the pseudouridine at position 1915 (m3Psi1915) in 23S rRNA. This Lactobacillus gasseri (strain ATCC 33323 / DSM 20243 / BCRC 14619 / CIP 102991 / JCM 1131 / KCTC 3163 / NCIMB 11718 / NCTC 13722 / AM63) protein is Ribosomal RNA large subunit methyltransferase H.